We begin with the raw amino-acid sequence, 767 residues long: MAPLFLLLLLLLSPSPTSAHRFAYSAPNRPEVRTTTGSVRGLLIPAGPSGSTAAAFLGIPFAVPPLGPLRFRPPLPIPTPWTGIRDADSQPFACYQMVDTTFPGFQGSEMWNPNREMSEDCLYLNVWTQKGDPTEPPVLVWIYGGGFTGGSVSLDVYDGRYLAAAEEAVVVSMNYRVGSLGFLALAGHRDAPGNVGLWDQRLALQWVRDNAEAFGGDPDLITLFGESAGAASVGFHLLSPHSKGLFRRAVLQSGSPNGPWATIGAAEGRRRAAALGRAVGCPYGNETEFLGCLRGKEAADVLEGEGVVMPPQSVFRFAFVPVVDGDFVVDSPDVALWGDYGVKGGEGGHGVEGGDGGYGVKGGDGVKGGYGGGYGARGVREGDGDGGYGVKEGLREGYGVKEGYGVEGDGANAYGARVPPRPHRDETPPDAYGAKGSADAYGAKAAPRPHRDETSPDAYGAKMPPRPHRDEASPDTYGAKMPPRPHRDETSPDAYGAKMPPRPHRAGGEVEVLLGAVRVEGSYFLVYGVPGFGKDNESLISREEFLGGVRMGVPQATELAAEAVVLHYTDWLDADNPVKNREALDDIVGDHNVVCPLMAFAQRWAQRGGKVYAYLFDHRSSTLLWPSWMGVPHGYEIEFVFGLPLEPRNNYTREEVELSRRIMRYWGNFARTGDPNGGVGGPRWPPYTPSGQRYAHLNARPLSVGHGLRTQICAFWTRFLPKLLNATGPPEDAEREWRLEFHRWSSYMGRWRTQFEHYSRQQPCATL.

Positions 1–19 are cleaved as a signal peptide; the sequence is MAPLFLLLLLLLSPSPTSA. The cysteines at positions 94 and 121 are disulfide-linked. Ser227 acts as the Acyl-ester intermediate in catalysis. Cys281 and Cys292 are joined by a disulfide. A glycan (N-linked (GlcNAc...) asparagine) is linked at Asn285. The segment at 401–504 is disordered; it reads KEGYGVEGDG…YGAKMPPRPH (104 aa). The Charge relay system role is filled by Glu520. N-linked (GlcNAc...) asparagine glycosylation occurs at Asn536. A disulfide bridge connects residues Cys595 and Cys713. Catalysis depends on His633, which acts as the Charge relay system. N-linked (GlcNAc...) asparagine glycans are attached at residues Asn650 and Asn725.

The protein belongs to the type-B carboxylesterase/lipase family. In terms of assembly, oligomer composed of disulfide-linked homodimers.

The protein localises to the synapse. It localises to the secreted. Its subcellular location is the cell membrane. It carries out the reaction acetylcholine + H2O = choline + acetate + H(+). Functionally, terminates signal transduction at the neuromuscular junction by rapid hydrolysis of the acetylcholine released into the synaptic cleft. The chain is Acetylcholinesterase (ACHE) from Gallus gallus (Chicken).